The chain runs to 239 residues: Phosducin-like protein 3 (239 aa).

Met1 is subject to N-acetylmethionine. In terms of domain architecture, Phosducin spans 32–180 (EAEEEQRILQ…EGDIKAQFIG (149 aa)). A phosphoserine mark is found at Ser43, Ser234, and Ser236. Residues 91 to 239 (FGEVLEISGK…MKRDSDSEGD (149 aa)) are thioredoxin fold.

It belongs to the phosducin family. In terms of assembly, interacts (via thioredoxin fold region) with KDR/VEGFR2 (via juxtamembrane domain). Forms ternary complexes with the chaperonin CCT complex and actin substrate, leading to inhibition of actin folding. Interacts with XIAP (via BIR 3 and RING domain). Interacts with HSP90AA1 and HSP90AB1. In terms of processing, N-terminal methionine acetylation destabilizes the protein.

It localises to the cytoplasm. The protein localises to the perinuclear region. Its subcellular location is the endoplasmic reticulum. Functionally, acts as a chaperone for the angiogenic VEGF receptor KDR/VEGFR2, increasing its abundance by inhibiting its ubiquitination and degradation. Inhibits the folding activity of the chaperonin-containing T-complex (CCT) which leads to inhibition of cytoskeletal actin folding. Acts as a chaperone during heat shock alongside HSP90 and HSP40/70 chaperone complexes. Modulates the activation of caspases during apoptosis. This Pongo abelii (Sumatran orangutan) protein is Phosducin-like protein 3 (PDCL3).